A 167-amino-acid polypeptide reads, in one-letter code: Peptide deformylase (167 aa).

Positions 91 and 133 each coordinate Fe cation. The active site involves glutamate 134. Histidine 137 is a binding site for Fe cation.

The protein belongs to the polypeptide deformylase family. Requires Fe(2+) as cofactor.

The enzyme catalyses N-terminal N-formyl-L-methionyl-[peptide] + H2O = N-terminal L-methionyl-[peptide] + formate. Functionally, removes the formyl group from the N-terminal Met of newly synthesized proteins. Requires at least a dipeptide for an efficient rate of reaction. N-terminal L-methionine is a prerequisite for activity but the enzyme has broad specificity at other positions. The polypeptide is Peptide deformylase (Nitrosococcus oceani (strain ATCC 19707 / BCRC 17464 / JCM 30415 / NCIMB 11848 / C-107)).